The chain runs to 475 residues: UDP-glycosyltransferase 101 (475 aa).

Residue His-15 is the Proton acceptor of the active site. His-15 provides a ligand contact to an anthocyanidin. The active-site Charge relay is Asp-117. The UDP-alpha-D-glucose site is built by Ala-345, Gln-347, His-362, Trp-365, Asn-366, Ser-367, and Glu-370. Position 385 (Gly-385) interacts with an anthocyanidin. The UDP-alpha-D-glucose site is built by Glu-386 and Gln-387.

Belongs to the UDP-glycosyltransferase family.

It carries out the reaction (20S)-protopanaxadiol + UDP-alpha-D-glucose = (20S)-ginsenoside C-K + UDP + H(+). It catalyses the reaction (20S)-ginsenoside Rg3 + UDP-alpha-D-glucose = (20S)-ginsenoside Rd + UDP + H(+). The enzyme catalyses (20S)-protopanaxatriol + UDP-alpha-D-glucose = (20S)-ginsenoside F1 + UDP + H(+). The catalysed reaction is (20S)-ginsenoside F1 + UDP-alpha-D-glucose = (20S)-ginsenoside Rg1 + UDP + H(+). The protein operates within secondary metabolite biosynthesis; terpenoid biosynthesis. Component of the dammarane-type triterpene saponins (e.g. ginsenosides or panaxosides) biosynthetic pathway. Glycosyltransferase that catalyzes the biosynthesis of ginsenoside F1 from protopanaxatriol (PPT) and the conversion of ginsenoside F1 to ginsenoside Rg1. Triggers C20-OH glycosylation of ginsenoside Rg3 to produce ginsenoside Rd. Mediates the conversion of protopanaxadiol (PPD) to the ginsenoside compound K. The protein is UDP-glycosyltransferase 101 of Panax ginseng (Korean ginseng).